The sequence spans 476 residues: Neuropeptide receptor 18 (476 aa).

The Extracellular segment spans residues 1 to 61; the sequence is MSSFYNEAKF…LSNHDNSSLM (61 aa). N-linked (GlcNAc...) asparagine glycans are attached at residues Asn43 and Asn57. The chain crosses the membrane as a helical span at residues 62–82; that stretch reads LIAGFYALLFMFGTCGNAAIL. The Cytoplasmic portion of the chain corresponds to 83-102; it reads AVVHHVKGQDPRSRHNTTLT. Residues 103-123 form a helical membrane-spanning segment; the sequence is YICILSIVDFLSMLPIPMTII. At 124–139 the chain is on the extracellular side; sequence DQILGFWMFDTFACKL. An intrachain disulfide couples Cys137 to Cys228. Residues 140-160 traverse the membrane as a helical segment; that stretch reads FRLLEHIGKIFSTFILVAFSI. The Cytoplasmic portion of the chain corresponds to 161 to 179; the sequence is DRYCAVCHPLQVRVRNQRT. The chain crosses the membrane as a helical span at residues 180-200; it reads VFVFLGIMFFVTCVMLSPILL. The Extracellular portion of the chain corresponds to 201–236; the sequence is YAHSKELVMHEKVDLDQEVITRMHLYKCVDDLGREL. A helical transmembrane segment spans residues 237–257; the sequence is FVVFTLYSFVLAYLMPLLFMI. The Cytoplasmic segment spans residues 258–291; sequence YFYYEMLIRLFKQANVIKQTLVGRRSGGEEKKLT. The helical transmembrane segment at 292–312 threads the bilayer; sequence IPVGHIAIYTLAICSFHFICW. The Extracellular segment spans residues 313–334; that stretch reads TPYWISILYSLYEELYQDTKST. A helical membrane pass occupies residues 335 to 355; sequence ASPPTYAFIYFMYGVHALPYI. Residues 356–476 lie on the Cytoplasmic side of the membrane; that stretch reads NSASNFILYG…ITPDTESVIL (121 aa).

Belongs to the G-protein coupled receptor 1 family. As to expression, expressed in sensory neurons including ASER.

Its subcellular location is the cell membrane. Functionally, probable receptor for neuropeptide ligand nlp-9 that plays a role in octopamine signaling and specifically, the octapamine inhibition of aversion responses in olfactory sensory neurons. In AWB olfactory sensory neurons, required for the detection of preferred food sources. This Caenorhabditis elegans protein is Neuropeptide receptor 18.